An 89-amino-acid polypeptide reads, in one-letter code: Phosphocarrier protein HPr (89 aa).

The HPr domain occupies 1 to 88 (MLKQSIEIIN…DLINGYFGEG (88 aa)). His15 (pros-phosphohistidine intermediate) is an active-site residue. Ser46 bears the Phosphoserine; by HPrK/P mark.

The protein belongs to the HPr family.

The protein localises to the cytoplasm. Its activity is regulated as follows. Phosphorylation on Ser-46 inhibits the phosphoryl transfer from enzyme I to HPr. General (non sugar-specific) component of the phosphoenolpyruvate-dependent sugar phosphotransferase system (sugar PTS). This major carbohydrate active-transport system catalyzes the phosphorylation of incoming sugar substrates concomitantly with their translocation across the cell membrane. The phosphoryl group from phosphoenolpyruvate (PEP) is transferred to the phosphoryl carrier protein HPr by enzyme I. Phospho-HPr then transfers it to the PTS EIIA domain. In Neisseria meningitidis serogroup A / serotype 4A (strain DSM 15465 / Z2491), this protein is Phosphocarrier protein HPr (ptsH).